Reading from the N-terminus, the 194-residue chain is Phosphoheptose isomerase (194 aa).

In terms of domain architecture, SIS spans 37-194 (ISNSFKQGGK…LIEFEMAKQA (158 aa)). 52-54 (NGG) lines the substrate pocket. Zn(2+)-binding residues include histidine 61 and glutamate 65. Substrate is bound by residues glutamate 65, 93–94 (ND), 119–121 (STS), serine 124, and glutamine 172. Zn(2+) contacts are provided by glutamine 172 and histidine 180.

This sequence belongs to the SIS family. GmhA subfamily. As to quaternary structure, homotetramer. Requires Zn(2+) as cofactor.

Its subcellular location is the cytoplasm. It catalyses the reaction 2 D-sedoheptulose 7-phosphate = D-glycero-alpha-D-manno-heptose 7-phosphate + D-glycero-beta-D-manno-heptose 7-phosphate. Its pathway is carbohydrate biosynthesis; D-glycero-D-manno-heptose 7-phosphate biosynthesis; D-glycero-alpha-D-manno-heptose 7-phosphate and D-glycero-beta-D-manno-heptose 7-phosphate from sedoheptulose 7-phosphate: step 1/1. It participates in bacterial outer membrane biogenesis; LOS core biosynthesis. Its function is as follows. Catalyzes the isomerization of sedoheptulose 7-phosphate in D-glycero-D-manno-heptose 7-phosphate. The sequence is that of Phosphoheptose isomerase from Haemophilus influenzae (strain ATCC 51907 / DSM 11121 / KW20 / Rd).